The sequence spans 93 residues: Small ribosomal subunit protein bS20c (93 aa).

Belongs to the bacterial ribosomal protein bS20 family.

The protein localises to the plastid. Its subcellular location is the chloroplast. Binds directly to 16S ribosomal RNA. In Thalassiosira pseudonana (Marine diatom), this protein is Small ribosomal subunit protein bS20c.